A 627-amino-acid polypeptide reads, in one-letter code: Coiled-coil domain-containing protein 22 (627 aa).

Residues 1-321 form a sufficient for interaction with COMMD1 region; it reads MEEADRILIH…VSDVPATSRR (321 aa). Residues 1-447 form a sufficicient and required for interaction with CCDC93 region; sequence MEEADRILIH…LQDCRELESS (447 aa). The segment at 218-243 is disordered; the sequence is TGRDRPGDEDWVHRTSRLPPQEDTRA. A compositionally biased stretch (basic and acidic residues) spans 219 to 230; sequence GRDRPGDEDWVH. Positions 320 to 627 form a coiled coil; sequence RRPEQVTWAA…AGLLGRVREA (308 aa). Serine 410 carries the phosphoserine modification.

It belongs to the CCDC22 family. In terms of assembly, component of the commander complex consisting of the CCC subcomplex and the retriever subcomplex. Component of the CCC (COMMD/CCDC22/CCDC93) subcomplex consisting of COMMD1, COMMD2, COMMD3, COMMD4, COMMD5, COMMD6, COMMD7, COMMD8, COMMD9, COMMD10, CCDC22 and CCDC93. Forms a coiled-coil heterodimer with CCDC22; this heterodimer interacts with the guanine nucleotide exchange factor DENND10; the interaction is direct. Interacts with CUL1, CUL2, CUL3, SKP1, BTRC. Interacts with SNX17 and SNX31. Interacts with CPNE1 and CPNE4. As to expression, widely expressed in adult tissues and in fetal liver and brain, with highest levels in prostate and lowest in skeletal muscle.

It is found in the endosome. The protein localises to the cytoplasm. The protein resides in the cytoskeleton. It localises to the microtubule organizing center. Its subcellular location is the centrosome. In terms of biological role, component of the commander complex that is essential for endosomal recycling of transmembrane cargos; the Commander complex is composed of composed of the CCC subcomplex and the retriever subcomplex. Component of the CCC complex, which is involved in the regulation of endosomal recycling of surface proteins, including integrins, signaling receptor and channels. Involved in regulation of NF-kappa-B signaling. Promotes ubiquitination of I-kappa-B-kinase subunit IKBKB and its subsequent proteasomal degradation leading to NF-kappa-B activation; the function may involve association with COMMD8 and a CUL1-dependent E3 ubiquitin ligase complex. May down-regulate NF-kappa-B activity via association with COMMD1 and involving a CUL2-dependent E3 ubiquitin ligase complex. Regulates the cellular localization of COMM domain-containing proteins, such as COMMD1 and COMMD10. Component of the CCC complex, which is involved in the regulation of endosomal recycling of surface proteins, including integrins, signaling receptor and channels. The CCC complex associates with SNX17, retriever and WASH complexes to prevent lysosomal degradation and promote cell surface recycling of numerous cargos such as integrins ITGA5:ITGB1. Plays a role in copper ion homeostasis. Involved in copper-dependent ATP7A trafficking between the trans-Golgi network and vesicles in the cell periphery; the function is proposed to depend on its association within the CCC complex and cooperation with the WASH complex on early endosomes. (Microbial infection) The CCC complex, in collaboration with the heterotrimeric retriever complex, mediates the exit of human papillomavirus to the cell surface. The polypeptide is Coiled-coil domain-containing protein 22 (CCDC22) (Homo sapiens (Human)).